A 564-amino-acid chain; its full sequence is MTEEIRELIEKFALQNAVKYRSAPNHGAVMGKLMGERPDLRPRAREIAPLITSVLNEIERMSPEQWESRLREMAPELIEEISARKEPAKGLQPLEGAEGGVVMRFAPNPNGPPTLGSARGIIINSEYVKMYGGKFILRFDDTDPVNKRPMIEAYDWYIEDCKWLGAEPHEIVAASQRVEKYYEVAEELIRRGGAYVCLCEQTAFKALKDAAMPCPHRDQTVDENMALWNKMLDGSFQEGEAVLRVKTDIKHKDPAMRDWAGFRIVTKSHPLVGERYRVWPLLDFESAVEDHLLGVTHILRGKDLIDSERRQRYLYDHMGWVYPRVLHWGRVKIFQFGAFSTSKLRKAIEAGEYSGWDDPRLPTVRAMRRRGITAEALRKFMIDLGVGETDISISMDSIYAENRRIVDPIANRRFFVWDPVEIEIKGEVPEVAEAPLHPTIDRGTRRIRAGGRLLLCKEDVAGLAPGSRIRLKDLCNIEIKEIFPLRAELIDLSPETAKRLKLRIIHWAPVEGIPVRVLGPDKTDTGIGEHGISDELDRIVQFERYGFVRIDSVGEEVVAYFAHR.

Residues 107 to 117 (PNPNGPPTLGS) carry the 'HIGH' region motif.

This sequence belongs to the class-I aminoacyl-tRNA synthetase family. Glutamate--tRNA ligase type 2 subfamily.

It is found in the cytoplasm. The enzyme catalyses tRNA(Glu) + L-glutamate + ATP = L-glutamyl-tRNA(Glu) + AMP + diphosphate. In terms of biological role, catalyzes the attachment of glutamate to tRNA(Glu) in a two-step reaction: glutamate is first activated by ATP to form Glu-AMP and then transferred to the acceptor end of tRNA(Glu). This chain is Glutamate--tRNA ligase, found in Methanothrix thermoacetophila (strain DSM 6194 / JCM 14653 / NBRC 101360 / PT) (Methanosaeta thermophila).